The sequence spans 491 residues: MARAACLLRAISRALLLPLPLLLLLLLLLPPQLMARARPPENHRHRPVKRVPQLLPAALPNSLPSVPASHWVPGPASSSRPLRCGVPDPPDVLNARNRQKRFVLSGGRWEKTDLTYRILRFPWQLVREQVRQTVAEALRVWSEVTPLTFTEVHEGRADIMIDFTRYWHGDNLPFDGPGGILAHAFFPKTHREGDVHFDYDETWTIGDKGTDLLQVAAHEFGHVLGLQHTTAAKALMSPFYTFRYPLSLSPDDRRGIQHLYGRPQLTPTSPTPTLSSQAGTDTNEIALQEPEVPPEVCETSFDAVSTIRGELFFFKAGFVWRLRSGQLQPGYPALASRHWQGLPSPVDAAFEDAQGQIWFFQGAQYWVYDGEKPVLGPAPLSKLGLQGSPVHAALVWGPEKNKIYFFRGGDYWRFHPRTQRVDNPVPRRTTDWRGVPSEIDAAFQDAEGYAYFLRGHLYWKFDPVKVKVLESFPRPIGPDFFDCAEPANTFR.

An N-terminal signal peptide occupies residues 1–35 (MARAACLLRAISRALLLPLPLLLLLLLLLPPQLMA). Positions 36-101 (RARPPENHRH…VLNARNRQKR (66 aa)) are cleaved as a propeptide — activation peptide. A Cysteine switch motif is present at residues 82 to 89 (LRCGVPDP). Residues Cys-84, His-168, and Asp-170 each coordinate Zn(2+). Residues Asp-175, Gly-176, Gly-178, and Ile-180 each contribute to the Ca(2+) site. The Zn(2+) site is built by His-183, His-196, and His-218. Glu-219 is a catalytic residue. Zn(2+)-binding residues include His-222 and His-228. Residues 260-279 (YGRPQLTPTSPTPTLSSQAG) form a disordered region. A compositionally biased stretch (low complexity) spans 263–277 (PQLTPTSPTPTLSSQ). Cys-297 and Cys-483 are oxidised to a cystine. Hemopexin repeat units lie at residues 298-342 (ETSF…WQGL), 343-385 (PSPV…KLGL), 387-435 (GSPV…WRGV), and 436-483 (PSEI…FFDC).

Belongs to the peptidase M10A family. It depends on Ca(2+) as a cofactor. The cofactor is Zn(2+). In terms of processing, the precursor is cleaved by a furin endopeptidase. Highly expressed in ovary and uterus.

It localises to the secreted. The protein resides in the extracellular space. Its subcellular location is the extracellular matrix. In terms of biological role, may play an important role in the progression of epithelial malignancies. The sequence is that of Stromelysin-3 (Mmp11) from Rattus norvegicus (Rat).